The following is a 233-amino-acid chain: Phosphatidylserine decarboxylase proenzyme (233 aa).

Catalysis depends on serine 190, which acts as the Schiff-base intermediate with substrate; via pyruvic acid. At serine 190 the chain carries Pyruvic acid (Ser); by autocatalysis.

The protein belongs to the phosphatidylserine decarboxylase family. PSD-A subfamily. Heterodimer of a large membrane-associated beta subunit and a small pyruvoyl-containing alpha subunit. The cofactor is pyruvate. In terms of processing, is synthesized initially as an inactive proenzyme. Formation of the active enzyme involves a self-maturation process in which the active site pyruvoyl group is generated from an internal serine residue via an autocatalytic post-translational modification. Two non-identical subunits are generated from the proenzyme in this reaction, and the pyruvate is formed at the N-terminus of the alpha chain, which is derived from the carboxyl end of the proenzyme. The post-translation cleavage follows an unusual pathway, termed non-hydrolytic serinolysis, in which the side chain hydroxyl group of the serine supplies its oxygen atom to form the C-terminus of the beta chain, while the remainder of the serine residue undergoes an oxidative deamination to produce ammonia and the pyruvoyl prosthetic group on the alpha chain.

It is found in the cell membrane. It catalyses the reaction a 1,2-diacyl-sn-glycero-3-phospho-L-serine + H(+) = a 1,2-diacyl-sn-glycero-3-phosphoethanolamine + CO2. It participates in phospholipid metabolism; phosphatidylethanolamine biosynthesis; phosphatidylethanolamine from CDP-diacylglycerol: step 2/2. Functionally, catalyzes the formation of phosphatidylethanolamine (PtdEtn) from phosphatidylserine (PtdSer). The sequence is that of Phosphatidylserine decarboxylase proenzyme from Bartonella quintana (strain Toulouse) (Rochalimaea quintana).